A 197-amino-acid polypeptide reads, in one-letter code: dTTP/UTP pyrophosphatase (197 aa).

The active-site Proton acceptor is the Asp70.

Belongs to the Maf family. YhdE subfamily. The cofactor is a divalent metal cation.

It localises to the cytoplasm. The enzyme catalyses dTTP + H2O = dTMP + diphosphate + H(+). It carries out the reaction UTP + H2O = UMP + diphosphate + H(+). Nucleoside triphosphate pyrophosphatase that hydrolyzes dTTP and UTP. May have a dual role in cell division arrest and in preventing the incorporation of modified nucleotides into cellular nucleic acids. This Escherichia coli O6:K15:H31 (strain 536 / UPEC) protein is dTTP/UTP pyrophosphatase (yceF2).